A 473-amino-acid chain; its full sequence is Pre-mRNA-splicing factor PRP46 (473 aa).

The span at 1-14 (MSTSLETPSGTSAG) shows a compositional bias: polar residues. Disordered stretches follow at residues 1–21 (MSTS…VASG) and 103–126 (GPNV…QAVA). WD repeat units lie at residues 180–219 (GHMG…LKLS), 222–261 (GHIS…VIRH), 264–303 (GHFS…NIFT), 306–347 (GHTS…NTLT), 349–388 (HKKS…FVNN), 391–429 (GHEA…PFQH), and 440–473 (DAEA…SEQA).

It belongs to the WD repeat PRL1/PRL2 family. In terms of assembly, associated with the spliceosome.

It localises to the cytoplasm. It is found in the nucleus. Functionally, involved in pre-mRNA splicing and required for cell cycle progression at G2/M. The protein is Pre-mRNA-splicing factor PRP46 (PRP46) of Cryptococcus neoformans var. neoformans serotype D (strain B-3501A) (Filobasidiella neoformans).